Reading from the N-terminus, the 248-residue chain is Segregation and condensation protein A (248 aa).

Belongs to the ScpA family. Component of a cohesin-like complex composed of ScpA, ScpB and the Smc homodimer, in which ScpA and ScpB bind to the head domain of Smc. The presence of the three proteins is required for the association of the complex with DNA.

It localises to the cytoplasm. Functionally, participates in chromosomal partition during cell division. May act via the formation of a condensin-like complex containing Smc and ScpB that pull DNA away from mid-cell into both cell halves. This chain is Segregation and condensation protein A, found in Clostridium perfringens (strain SM101 / Type A).